We begin with the raw amino-acid sequence, 2072 residues long: Protein still life, isoform SIF type 1 (2072 aa).

Gly-2 carries N-myristoyl glycine lipidation. The region spanning 29-147 (RRDGHLLSSF…ECCSPSFKFS (119 aa)) is the WH1 domain. Disordered stretches follow at residues 153–188 (SYSL…EPQC), 245–284 (DNVA…NTNT), 327–355 (EGTQ…RNKD), 459–486 (NNTM…RGYP), 502–576 (EGSP…SPTS), 618–655 (AKSS…ELIR), and 699–747 (SGSS…YKSA). Polar residues predominate over residues 275-284 (VANSGVNTNT). 3 stretches are compositionally biased toward low complexity: residues 338 to 351 (SVGT…GTGT), 459 to 476 (NNTM…SGSR), and 522 to 553 (SSSN…PPQR). Residues 564 to 576 (APNVTPTPGSPTS) are compositionally biased toward polar residues. The segment covering 634-655 (IRDKERDRDRDGYYSDRNELIR) has biased composition (basic and acidic residues). Residues 732–743 (SLRQDSSLNDSG) are compositionally biased toward polar residues. In terms of domain architecture, PH spans 840 to 958 (TGAVRKAGFL…SIHSACAAAF (119 aa)). A disordered region spans residues 1088–1119 (GRGATKRRPPMLSRSNSGSSRRSMQMNSRDEP). A compositionally biased stretch (low complexity) spans 1100-1114 (SRSNSGSSRRSMQMN). An RBD domain is found at 1121–1188 (KTFKVAMPDN…PHRNDLIENY (68 aa)). Residues 1204-1293 (QVELQRTTLE…LSMMMRSSRT (90 aa)) enclose the PDZ domain. The disordered stretch occupies residues 1403-1424 (AEQETRKSSPTGSVTSSVSTTA). Over residues 1410 to 1424 (SSPTGSVTSSVSTTA) the composition is skewed to low complexity. Positions 1436–1630 (KLRKVVMELV…EKVAEHINEM (195 aa)) constitute a DH domain. Disordered regions lie at residues 1803-1832 (MKNF…NSQT), 1844-2039 (HGSH…YQPV), and 2051-2072 (PRDM…DVKN). Low complexity-rich tracts occupy residues 1811 to 1821 (GSVSGHSSQGM) and 1926 to 1943 (QQQQ…QQGH). The span at 1970–1984 (HSSDIERIDPGTKSE) shows a compositional bias: basic and acidic residues. Over residues 2007–2022 (LTLSTTSTLSVGSTGS) the composition is skewed to low complexity. Positions 2023-2032 (QARLIQSSHP) are enriched in polar residues.

In terms of tissue distribution, expressed in both larval and adult brains, mainly in a subset of neurons but not in glia. In the adult eye is expressed in the two primary pigment cells in the subapical region of the eye. Also present in photoreceptors.

It is found in the synapse. Regulates synaptic differentiation through the organization of actin cytoskeleton possibly by activating Rho-like GTPases. Is likely a factor in the cascade of Rac1 or Cdc42 in the neurons. May play a role in maintaining proper septate junction functions. Required for eye development and most likely affects corneal lens-formation. This is Protein still life, isoform SIF type 1 (sif) from Drosophila melanogaster (Fruit fly).